We begin with the raw amino-acid sequence, 103 residues long: Histone H4 (103 aa).

Gly residues predominate over residues 1–14; sequence MSGRGKGGKGLGKG. A disordered region spans residues 1–20; that stretch reads MSGRGKGGKGLGKGGAKRHR. Residues 17–21 mediate DNA binding; it reads KRHRK.

This sequence belongs to the histone H4 family. The nucleosome is a histone octamer containing two molecules each of H2A, H2B, H3 and H4 assembled in one H3-H4 heterotetramer and two H2A-H2B heterodimers. The octamer wraps approximately 147 bp of DNA.

Its subcellular location is the nucleus. The protein resides in the chromosome. Core component of nucleosome. Nucleosomes wrap and compact DNA into chromatin, limiting DNA accessibility to the cellular machineries which require DNA as a template. Histones thereby play a central role in transcription regulation, DNA repair, DNA replication and chromosomal stability. DNA accessibility is regulated via a complex set of post-translational modifications of histones, also called histone code, and nucleosome remodeling. The chain is Histone H4 (H41) from Physarum polycephalum (Slime mold).